A 444-amino-acid chain; its full sequence is Gentisate transporter (444 aa).

The next 12 membrane-spanning stretches (helical) occupy residues 42 to 64 (AAVL…YGTV), 79 to 101 (LGTI…GRLS), 108 to 127 (AAVI…CAFA), 131 to 153 (WVFG…SVNA), 166 to 188 (AWAT…LALV), 198 to 220 (WRFM…MKVI), 252 to 274 (WISI…LGTW), 289 to 311 (ALMF…AWAG), 318 to 340 (RSGV…YPPV), 344 to 366 (YVIL…AAVA), 378 to 400 (LGWA…GLLL), and 410 to 428 (FIMF…SVLL).

It belongs to the major facilitator superfamily. Aromatic acid:H(+) symporter (AAHS) (TC 2.A.1.15) family.

The protein localises to the cell membrane. Transport of gentisate (2,5-dihydroxybenzoate) into the cell. Does not transport 3-hydroxybenzoate or benzoate. This chain is Gentisate transporter (genK), found in Corynebacterium glutamicum (strain ATCC 13032 / DSM 20300 / JCM 1318 / BCRC 11384 / CCUG 27702 / LMG 3730 / NBRC 12168 / NCIMB 10025 / NRRL B-2784 / 534).